Consider the following 803-residue polypeptide: Volume-regulated anion channel subunit LRRC8B (803 aa).

Topologically, residues 1–25 are cytoplasmic; the sequence is MITLTELKCLADAQSSYHILKPWWD. A helical membrane pass occupies residues 26-46; it reads VFWYYITLIMLLVAVLAGALQ. Residues 47–119 lie on the Extracellular side of the membrane; that stretch reads LTQSRVLCCL…YEKQLHWFAK (73 aa). 2 cysteine pairs are disulfide-bonded: C55–C304 and C109–C289. A glycan (N-linked (GlcNAc...) asparagine) is linked at N78. A helical membrane pass occupies residues 120-140; that stretch reads FFPYLVLLHTLIFAACSNFWL. The Cytoplasmic portion of the chain corresponds to 141–261; it reads HYPSTSSRLE…DIIYRVYLKQ (121 aa). Phosphoserine occurs at positions 186 and 196. A helical transmembrane segment spans residues 262 to 282; the sequence is IIVKVILFVLIITYVPYFLTH. The Extracellular portion of the chain corresponds to 283 to 307; that stretch reads ITLEIDCSVDVQAFTGYKRYQCVYS. Residues 308–328 traverse the membrane as a helical segment; the sequence is LAEIFKVLASFYVILVILYGL. The Cytoplasmic segment spans residues 329–803; the sequence is TSSYSLWWML…ERLQTCLDKC (475 aa). LRR repeat units lie at residues 464–486, 488–509, 511–532, 539–559, 562–582, 586–607, 609–630, 634–655, 657–678, 680–701, 703–724, 726–747, and 749–771; these read NLKE…AFLE, NLKI…VFHL, NLKE…MQLE, NLRT…VTDL, SLQK…NNLK, NLKS…IFSL, NLHE…ISFQ, NLSC…IGAL, NLEQ…LFLC, KLHY…IQYL, NLQY…LFQC, KLQC…VGEL, and NLTH…EGCQ.

This sequence belongs to the LRRC8 family. In terms of assembly, heterohexamer; oligomerizes with other LRRC8 proteins (LRRC8A, LRRC8C, LRRC8D and/or LRRC8E) to form a heterohexamer. In vivo, the subunit composition may depend primarily on expression levels, and heterooligomeric channels containing various proportions of the different LRRC8 proteins may coexist.

Its subcellular location is the cell membrane. It localises to the endoplasmic reticulum membrane. The catalysed reaction is chloride(in) = chloride(out). It carries out the reaction iodide(out) = iodide(in). It catalyses the reaction taurine(out) = taurine(in). Non-essential component of the volume-regulated anion channel (VRAC, also named VSOAC channel), an anion channel required to maintain a constant cell volume in response to extracellular or intracellular osmotic changes. The VRAC channel conducts iodide better than chloride and can also conduct organic osmolytes like taurine. Channel activity requires LRRC8A plus at least one other family member (LRRC8B, LRRC8C, LRRC8D or LRRC8E); channel characteristics depend on the precise subunit composition. This Homo sapiens (Human) protein is Volume-regulated anion channel subunit LRRC8B.